Reading from the N-terminus, the 37-residue chain is MMTTLLPVFTKPSPLALNALRAGRICRFLLIPDGRIR.

This is Protein YhiY from Escherichia coli (strain K12).